The chain runs to 564 residues: Formate--tetrahydrofolate ligase (564 aa).

An ATP-binding site is contributed by 65–72; the sequence is TPLGEGKT.

It belongs to the formate--tetrahydrofolate ligase family.

It catalyses the reaction (6S)-5,6,7,8-tetrahydrofolate + formate + ATP = (6R)-10-formyltetrahydrofolate + ADP + phosphate. The protein operates within one-carbon metabolism; tetrahydrofolate interconversion. This Roseiflexus castenholzii (strain DSM 13941 / HLO8) protein is Formate--tetrahydrofolate ligase.